A 132-amino-acid chain; its full sequence is Phosphoribosyl-ATP pyrophosphatase (132 aa).

It belongs to the PRA-PH family.

Its subcellular location is the cytoplasm. It catalyses the reaction 1-(5-phospho-beta-D-ribosyl)-ATP + H2O = 1-(5-phospho-beta-D-ribosyl)-5'-AMP + diphosphate + H(+). Its pathway is amino-acid biosynthesis; L-histidine biosynthesis; L-histidine from 5-phospho-alpha-D-ribose 1-diphosphate: step 2/9. The chain is Phosphoribosyl-ATP pyrophosphatase from Acidovorax sp. (strain JS42).